Reading from the N-terminus, the 206-residue chain is Small ribosomal subunit protein uS4 (206 aa).

An S4 RNA-binding domain is found at 96–156; the sequence is TRLDNVVYRM…EKSQKQARIK (61 aa).

It belongs to the universal ribosomal protein uS4 family. As to quaternary structure, part of the 30S ribosomal subunit. Contacts protein S5. The interaction surface between S4 and S5 is involved in control of translational fidelity.

In terms of biological role, one of the primary rRNA binding proteins, it binds directly to 16S rRNA where it nucleates assembly of the body of the 30S subunit. Functionally, with S5 and S12 plays an important role in translational accuracy. This Shewanella loihica (strain ATCC BAA-1088 / PV-4) protein is Small ribosomal subunit protein uS4.